A 431-amino-acid polypeptide reads, in one-letter code: Pyroglutamylated RF-amide peptide receptor (431 aa).

Topologically, residues 1–46 are extracellular; the sequence is MQALNITPEQFSRLLRDHNLTREQFIALYRLRPLVYTPELPGRAKL. A glycan (N-linked (GlcNAc...) asparagine) is linked at N19. Residues 47 to 67 traverse the membrane as a helical segment; the sequence is ALVLTGVLIFALALFGNALVF. The Cytoplasmic portion of the chain corresponds to 68-81; sequence YVVTRSKAMRTVTN. A helical membrane pass occupies residues 82-102; that stretch reads IFICSLALSDLLITFFCIPVT. The Extracellular portion of the chain corresponds to 103 to 120; it reads MLQNISDNWLGGAFICKM. Residues 121–141 form a helical membrane-spanning segment; the sequence is VPFVQSTAVVTEILTMTCIAV. Topologically, residues 142–162 are cytoplasmic; the sequence is ERHQGLVHPFKMKWQYTNRRA. Residues 163-183 traverse the membrane as a helical segment; that stretch reads FTMLGVVWLVAVIVGSPMWHV. Over 184 to 212 the chain is Extracellular; sequence QQLEIKYDFLYEKEHICCLEEWTSPVHQK. Residues 213 to 233 form a helical membrane-spanning segment; sequence IYTTFILVILFLLPLMVMLIL. Residues 234-271 lie on the Cytoplasmic side of the membrane; the sequence is YSKIGYELWIKKRVGDGSVLRTIHGKEMSKIARKKKRA. Residues 272–292 form a helical membrane-spanning segment; the sequence is VIMMVTVVALFAVCWAPFHVV. Residues 293 to 311 lie on the Extracellular side of the membrane; that stretch reads HMMIEYSNFEKEYDDVTIK. Residues 312-332 traverse the membrane as a helical segment; sequence MIFAIVQIIGFSNSICNPIVY. Residues 333 to 431 are Cytoplasmic-facing; it reads AFMNENFKKN…AENSPLDSGH (99 aa).

Belongs to the G-protein coupled receptor 1 family. Expressed widely in the brain with high levels in the hypothalamus, trigeminal ganglia and vestibular neurons, and moderate levels in the amygdala, cortex, pituitary, hippocampus, thalamus, caudate nucleus and medulla oblongata. In peripheral tissues, expressed at high levels in the retina and at moderate levels in the heart, kidney, testis and thyroid.

It localises to the cell membrane. Functionally, receptor for the orexigenic neuropeptide QRFP. The activity of this receptor is mediated by G proteins that modulate adenylate cyclase activity and intracellular calcium levels. This chain is Pyroglutamylated RF-amide peptide receptor (QRFPR), found in Homo sapiens (Human).